The chain runs to 162 residues: Transcription elongation factor GreA (162 aa).

The stretch at 45–74 (ENAEYEAAREKQAFIEGRIKELEDMTARAE) forms a coiled coil.

Belongs to the GreA/GreB family.

Its function is as follows. Necessary for efficient RNA polymerase transcription elongation past template-encoded arresting sites. The arresting sites in DNA have the property of trapping a certain fraction of elongating RNA polymerases that pass through, resulting in locked ternary complexes. Cleavage of the nascent transcript by cleavage factors such as GreA or GreB allows the resumption of elongation from the new 3'terminus. GreA releases sequences of 2 to 3 nucleotides. The chain is Transcription elongation factor GreA from Rickettsia prowazekii (strain Madrid E).